The sequence spans 152 residues: UPF0225 protein YchJ (152 aa).

This sequence belongs to the UPF0225 family.

The chain is UPF0225 protein YchJ from Escherichia coli O6:K15:H31 (strain 536 / UPEC).